A 353-amino-acid chain; its full sequence is Photosystem II protein D1 (353 aa).

An N-acetylthreonine modification is found at Thr-2. At Thr-2 the chain carries Phosphothreonine. The next 3 membrane-spanning stretches (helical) occupy residues 29–46 (YIGWFGVLMIPTLLTATS), 118–133 (HFLLGVACYMGREWEL), and 142–156 (WIAVAYSAPVAAATA). Residue His-118 participates in chlorophyll a binding. Residue Tyr-126 coordinates pheophytin a. Residues Asp-170 and Glu-189 each contribute to the [CaMn4O5] cluster site. The helical transmembrane segment at 197–218 (FHMLGVAGVFGGSLFSAMHGSL) threads the bilayer. His-198 contacts chlorophyll a. Residues His-215 and 264–265 (SF) each bind a quinone. His-215 provides a ligand contact to Fe cation. His-272 contacts Fe cation. Residues 274–288 (FLAAWPVVGIWFTAL) traverse the membrane as a helical segment. [CaMn4O5] cluster contacts are provided by His-332, Glu-333, Asp-342, and Ala-344. Positions 345–353 (AVEVPSTNG) are excised as a propeptide.

It belongs to the reaction center PufL/M/PsbA/D family. As to quaternary structure, PSII is composed of 1 copy each of membrane proteins PsbA, PsbB, PsbC, PsbD, PsbE, PsbF, PsbH, PsbI, PsbJ, PsbK, PsbL, PsbM, PsbT, PsbX, PsbY, PsbZ, Psb30/Ycf12, at least 3 peripheral proteins of the oxygen-evolving complex and a large number of cofactors. It forms dimeric complexes. Requires The D1/D2 heterodimer binds P680, chlorophylls that are the primary electron donor of PSII, and subsequent electron acceptors. It shares a non-heme iron and each subunit binds pheophytin, quinone, additional chlorophylls, carotenoids and lipids. D1 provides most of the ligands for the Mn4-Ca-O5 cluster of the oxygen-evolving complex (OEC). There is also a Cl(-1) ion associated with D1 and D2, which is required for oxygen evolution. The PSII complex binds additional chlorophylls, carotenoids and specific lipids. as cofactor. Tyr-161 forms a radical intermediate that is referred to as redox-active TyrZ, YZ or Y-Z. In terms of processing, C-terminally processed by CTPA; processing is essential to allow assembly of the oxygen-evolving complex and thus photosynthetic growth.

It localises to the plastid. The protein localises to the chloroplast thylakoid membrane. It carries out the reaction 2 a plastoquinone + 4 hnu + 2 H2O = 2 a plastoquinol + O2. Its function is as follows. Photosystem II (PSII) is a light-driven water:plastoquinone oxidoreductase that uses light energy to abstract electrons from H(2)O, generating O(2) and a proton gradient subsequently used for ATP formation. It consists of a core antenna complex that captures photons, and an electron transfer chain that converts photonic excitation into a charge separation. The D1/D2 (PsbA/PsbD) reaction center heterodimer binds P680, the primary electron donor of PSII as well as several subsequent electron acceptors. The chain is Photosystem II protein D1 from Calycanthus floridus var. glaucus (Eastern sweetshrub).